The sequence spans 449 residues: Methylenetetrahydrofolate--tRNA-(uracil-5-)-methyltransferase TrmFO (449 aa).

Gly9–Gly14 contributes to the FAD binding site.

This sequence belongs to the MnmG family. TrmFO subfamily. FAD serves as cofactor.

It is found in the cytoplasm. The catalysed reaction is uridine(54) in tRNA + (6R)-5,10-methylene-5,6,7,8-tetrahydrofolate + NADH + H(+) = 5-methyluridine(54) in tRNA + (6S)-5,6,7,8-tetrahydrofolate + NAD(+). The enzyme catalyses uridine(54) in tRNA + (6R)-5,10-methylene-5,6,7,8-tetrahydrofolate + NADPH + H(+) = 5-methyluridine(54) in tRNA + (6S)-5,6,7,8-tetrahydrofolate + NADP(+). Catalyzes the folate-dependent formation of 5-methyl-uridine at position 54 (M-5-U54) in all tRNAs. The protein is Methylenetetrahydrofolate--tRNA-(uracil-5-)-methyltransferase TrmFO of Gloeobacter violaceus (strain ATCC 29082 / PCC 7421).